Here is a 173-residue protein sequence, read N- to C-terminus: Large ribosomal RNA subunit accumulation protein YceD (173 aa).

The protein belongs to the DUF177 domain family.

Plays a role in synthesis, processing and/or stability of 23S rRNA. The sequence is that of Large ribosomal RNA subunit accumulation protein YceD (yceD) from Salmonella typhi.